A 358-amino-acid polypeptide reads, in one-letter code: uncharacterized protein (358 aa).

The EF-hand domain occupies 229–264 (KQLHEFKLAFDYFDQEKNGWLDYEHFELCLKSQGYN). Ca(2+) contacts are provided by D242, N246, W248, and H253.

This is an uncharacterized protein from Caenorhabditis elegans.